We begin with the raw amino-acid sequence, 196 residues long: Ribosome maturation factor RimP (196 aa).

The tract at residues 164 to 196 (LAPQKPNKPGPKKPGHDKKKPSNEPAAGKPRAE) is disordered. A compositionally biased stretch (basic residues) spans 173–182 (GPKKPGHDKK).

Belongs to the RimP family.

The protein resides in the cytoplasm. Required for maturation of 30S ribosomal subunits. The sequence is that of Ribosome maturation factor RimP from Xanthomonas campestris pv. campestris (strain 8004).